We begin with the raw amino-acid sequence, 103 residues long: Nucleoid-associated protein SUN_2278 (103 aa).

The protein belongs to the YbaB/EbfC family. In terms of assembly, homodimer.

The protein localises to the cytoplasm. The protein resides in the nucleoid. Its function is as follows. Binds to DNA and alters its conformation. May be involved in regulation of gene expression, nucleoid organization and DNA protection. The polypeptide is Nucleoid-associated protein SUN_2278 (Sulfurovum sp. (strain NBC37-1)).